The sequence spans 308 residues: Ribonuclease HIII (308 aa).

An RNase H type-2 domain is found at 92–308 (DNHIGSDEAG…ANTQKAQKLL (217 aa)). The a divalent metal cation site is built by D98, E99, and D204.

Belongs to the RNase HII family. RnhC subfamily. The cofactor is Mn(2+). Mg(2+) is required as a cofactor.

It is found in the cytoplasm. The catalysed reaction is Endonucleolytic cleavage to 5'-phosphomonoester.. Endonuclease that specifically degrades the RNA of RNA-DNA hybrids. The chain is Ribonuclease HIII from Oceanobacillus iheyensis (strain DSM 14371 / CIP 107618 / JCM 11309 / KCTC 3954 / HTE831).